Consider the following 377-residue polypeptide: Nitric oxide reductase FlRd-NAD(+) reductase (377 aa).

The protein belongs to the FAD-dependent oxidoreductase family. Requires FAD as cofactor.

Its subcellular location is the cytoplasm. The catalysed reaction is 2 reduced [nitric oxide reductase rubredoxin domain] + NAD(+) + H(+) = 2 oxidized [nitric oxide reductase rubredoxin domain] + NADH. Its pathway is nitrogen metabolism; nitric oxide reduction. In terms of biological role, one of at least two accessory proteins for anaerobic nitric oxide (NO) reductase. Reduces the rubredoxin moiety of NO reductase. This is Nitric oxide reductase FlRd-NAD(+) reductase from Escherichia coli O6:K15:H31 (strain 536 / UPEC).